A 371-amino-acid chain; its full sequence is Geranylgeranyl pyrophosphate synthase paxG (371 aa).

Isopentenyl diphosphate-binding residues include K89, R92, and H121. Residues D128 and D132 each contribute to the Mg(2+) site. R137 lines the dimethylallyl diphosphate pocket. R138 is an isopentenyl diphosphate binding site. K215, T216, and Q249 together coordinate dimethylallyl diphosphate. A Mg(2+)-binding site is contributed by D252. The dimethylallyl diphosphate site is built by N256, K266, and K276. The Peroxisomal targeting signal signature appears at 369 to 371 (GRV).

The protein belongs to the FPP/GGPP synthase family. Mg(2+) serves as cofactor.

It localises to the peroxisome. The enzyme catalyses isopentenyl diphosphate + dimethylallyl diphosphate = (2E)-geranyl diphosphate + diphosphate. It carries out the reaction isopentenyl diphosphate + (2E)-geranyl diphosphate = (2E,6E)-farnesyl diphosphate + diphosphate. The catalysed reaction is isopentenyl diphosphate + (2E,6E)-farnesyl diphosphate = (2E,6E,10E)-geranylgeranyl diphosphate + diphosphate. The protein operates within secondary metabolite biosynthesis. Functionally, geranylgeranyl pyrophosphate synthase; part of the gene cluster that mediates the biosynthesis of paxilline, a mycotoxin that acts as an inhibitor of mammalian maxi-K channels. PaxG, the geranylgeranyl diphosphate (GGPP) synthase is proposed to catalyze the first step in paxilline biosynthesis. Condensation of indole-3-glycerol phosphate with GGPP by paxC then forms 3-geranylgeranylindole (3-GGI), followed by epoxidation and cyclization of this intermediate (by paxM and paxB) to form paspaline. Paspaline is subsequently converted to 13-desoxypaxilline by paxP, the latter being then converted to paxilline by paxQ. Finally paxilline can be mono- and di-prenylated by paxD. This is Geranylgeranyl pyrophosphate synthase paxG from Penicillium paxilli.